Reading from the N-terminus, the 422-residue chain is 26S proteasome non-ATPase regulatory subunit 11 (422 aa).

The PCI domain maps to 224 to 392 (DWKTAYSYFY…GVLIIFDEPP (169 aa)).

The protein belongs to the proteasome subunit S9 family. Component of the 19S proteasome regulatory particle complex. The 26S proteasome consists of a 20S core particle (CP) and two 19S regulatory subunits (RP). The regulatory particle is made of a lid composed of 9 subunits including PSMD11, a base containing 6 ATPases and few additional components.

It localises to the nucleus. Its subcellular location is the cytoplasm. It is found in the cytosol. Functionally, component of the 26S proteasome, a multiprotein complex involved in the ATP-dependent degradation of ubiquitinated proteins. This complex plays a key role in the maintenance of protein homeostasis by removing misfolded or damaged proteins, which could impair cellular functions, and by removing proteins whose functions are no longer required. Therefore, the proteasome participates in numerous cellular processes, including cell cycle progression, apoptosis, or DNA damage repair. In the complex, PSMD11 is required for proteasome assembly. Plays a key role in increased proteasome activity in embryonic stem cells (ESCs): its high expression in ESCs promotes enhanced assembly of the 26S proteasome, followed by higher proteasome activity. The chain is 26S proteasome non-ATPase regulatory subunit 11 (psmd11) from Xenopus tropicalis (Western clawed frog).